A 256-amino-acid polypeptide reads, in one-letter code: MSFPYFISPEQAMRERSELARKGIARGKSVVALVYAGGVLFVAENPSRSLQKISELYDRVGFAAAGKFNEFDNLRRGGIQFADTRGYAYDRRDVTGRQLANVYAQTLGTIFTEQAKPYEVELCVAEVAHYGETKPPELYRITYDGSIADEPHFVVMGGTTEPITTALKDSYAENANLREATRIAVRALRAGSESSNGDQSALDVGSLEVAILDVNRPRRAFRRINRPTLENLLRELDSNGSDGNGDAPELNGGSSD.

The segment at 235-256 (ELDSNGSDGNGDAPELNGGSSD) is disordered.

The protein belongs to the peptidase T1A family. The 20S proteasome core is composed of 14 alpha and 14 beta subunits that assemble into four stacked heptameric rings, resulting in a barrel-shaped structure. The two inner rings, each composed of seven catalytic beta subunits, are sandwiched by two outer rings, each composed of seven alpha subunits. The catalytic chamber with the active sites is on the inside of the barrel. Has a gated structure, the ends of the cylinder being occluded by the N-termini of the alpha-subunits. Is capped by the proteasome-associated ATPase, ARC.

The protein localises to the cytoplasm. It functions in the pathway protein degradation; proteasomal Pup-dependent pathway. The formation of the proteasomal ATPase ARC-20S proteasome complex, likely via the docking of the C-termini of ARC into the intersubunit pockets in the alpha-rings, may trigger opening of the gate for substrate entry. Interconversion between the open-gate and close-gate conformations leads to a dynamic regulation of the 20S proteasome proteolysis activity. Its function is as follows. Component of the proteasome core, a large protease complex with broad specificity involved in protein degradation. In Mycolicibacterium paratuberculosis (strain ATCC BAA-968 / K-10) (Mycobacterium paratuberculosis), this protein is Proteasome subunit alpha.